The sequence spans 327 residues: Phenylalanine--tRNA ligase alpha subunit (327 aa).

Glu252 is a binding site for Mg(2+).

This sequence belongs to the class-II aminoacyl-tRNA synthetase family. Phe-tRNA synthetase alpha subunit type 1 subfamily. As to quaternary structure, tetramer of two alpha and two beta subunits. It depends on Mg(2+) as a cofactor.

It localises to the cytoplasm. It carries out the reaction tRNA(Phe) + L-phenylalanine + ATP = L-phenylalanyl-tRNA(Phe) + AMP + diphosphate + H(+). The sequence is that of Phenylalanine--tRNA ligase alpha subunit from Pectobacterium carotovorum subsp. carotovorum (strain PC1).